The primary structure comprises 265 residues: tRNA (guanine-N(1)-)-methyltransferase (265 aa).

Residues Gly-110 and 129-134 (LGDFVM) contribute to the S-adenosyl-L-methionine site. Positions 243 to 265 (LAAWGAPPPPLPKRRRGAKPNPN) are disordered. The segment covering 254-265 (PKRRRGAKPNPN) has biased composition (basic residues).

The protein belongs to the RNA methyltransferase TrmD family. Homodimer.

The protein resides in the cytoplasm. It catalyses the reaction guanosine(37) in tRNA + S-adenosyl-L-methionine = N(1)-methylguanosine(37) in tRNA + S-adenosyl-L-homocysteine + H(+). In terms of biological role, specifically methylates guanosine-37 in various tRNAs. This chain is tRNA (guanine-N(1)-)-methyltransferase, found in Deinococcus geothermalis (strain DSM 11300 / CIP 105573 / AG-3a).